We begin with the raw amino-acid sequence, 348 residues long: MSVPTTQKAVIFETNGGKLEYKDIPVPKPKANELLINVKYSGVCHTDLHAWKGDWPLATKLPLVGGHEGAGVVVALGENVKGWKVGDYAGVKWLNGSCLNCEYCQSGAEPNCAEADLSGYTHDGSFQQYATADAVQAARIPAGTDLANVAPILCAGVTVYKALKTAELEAGQWVAISGAAGGLGSLAVQYAKAMGYRVLAIDGGEDKGEFVKSLGAETFIDFTKEKDVVEAVKKATNGGPHGVINVSVSERAIGQSTEYVRTLGKVVLVGLPAGAKISTPVFDAVIKTIQIKGSYVGNRKDTAEAVDFFTRGLIKCPIKIVGLSELPEVYKLMEEGKILGRYVLDNDK.

Zn(2+)-binding residues include Cys-44, His-67, Cys-98, Cys-101, Cys-104, Cys-112, and Cys-154. NAD(+) is bound by residues 178-184, Asp-202, Lys-207, 269-271, and Arg-341; these read GAAGGLG and VGL.

The protein belongs to the zinc-containing alcohol dehydrogenase family. As to quaternary structure, homotetramer. Requires Zn(2+) as cofactor.

The protein resides in the cytoplasm. The enzyme catalyses a primary alcohol + NAD(+) = an aldehyde + NADH + H(+). It catalyses the reaction a secondary alcohol + NAD(+) = a ketone + NADH + H(+). This Candida albicans (strain SC5314 / ATCC MYA-2876) (Yeast) protein is Alcohol dehydrogenase 2 (ADH2).